A 426-amino-acid chain; its full sequence is Serine--tRNA ligase (426 aa).

Residues 37–63 are disordered; the sequence is RKSVQTRTEQLQAERNARSKSIGQAKA. 233–235 provides a ligand contact to L-serine; sequence TAE. 264 to 266 is a binding site for ATP; it reads RSE. Glu-287 is an L-serine binding site. ATP is bound at residue 351–354; sequence EISS. Ser-387 is a binding site for L-serine.

The protein belongs to the class-II aminoacyl-tRNA synthetase family. Type-1 seryl-tRNA synthetase subfamily. As to quaternary structure, homodimer. The tRNA molecule binds across the dimer.

Its subcellular location is the cytoplasm. The catalysed reaction is tRNA(Ser) + L-serine + ATP = L-seryl-tRNA(Ser) + AMP + diphosphate + H(+). The enzyme catalyses tRNA(Sec) + L-serine + ATP = L-seryl-tRNA(Sec) + AMP + diphosphate + H(+). Its pathway is aminoacyl-tRNA biosynthesis; selenocysteinyl-tRNA(Sec) biosynthesis; L-seryl-tRNA(Sec) from L-serine and tRNA(Sec): step 1/1. Catalyzes the attachment of serine to tRNA(Ser). Is also able to aminoacylate tRNA(Sec) with serine, to form the misacylated tRNA L-seryl-tRNA(Sec), which will be further converted into selenocysteinyl-tRNA(Sec). This is Serine--tRNA ligase from Pseudomonas entomophila (strain L48).